The primary structure comprises 947 residues: MDRITDFYFLDFRESVKTLIITGNSWRLQEMIDRFFTNISNFNRESLTEIQNIQIEEIAVNLWNWAVTKRVELSVRKNQAAKLCYIACKLVYMHGISVSSEEAIQRQILMNIKTGKEWLYTGNAQIADEFFQAAMTDLERLYVRLMQSCYTEANVCVYKMIVEKGIFHVLSYQAESAVAQGDFKKASMCVLRCKDMLMRLPNMTKYLHVLCYNLGIEASKRNKYKESSFWLGQSYEIGKMDRRSVEPQMLAKTLRLLATIYLNCGGEAYYTKAFIAILIANKEHLHPAGLFLKMRILMKGNSCNEELLEAAKEILYLAMPLEFYLSIIQFLIDNKRESVGFRFLRIISDNFKSPEDRKRILLFYIDTLLQKDQDMIAEEKIKDVLKGYQTRSRLSRDLVNWLHNILWGKASRSVKVQKYADALHWYSYSLKLYEYDKADLDLIKLKRNMVSCYLSLKQLDKAKEAIAEVEQKDPTHVFTRYYIFKIAIMEGDAFRALQVVSALKKSLMDGESEDRGLIEAGVSTLTILSLSIDFALENGQQFVAERALEYLCQLSKDPKEVLGGLKCLMRIILPQAFHMPESEYKKKEMGRLWNYLNTALLKFSEYFNEAPSTLDYMVNDANWFRKIAWNLAVQSEKDLEAMKNFFMVSYKLSLFCPLDQGLLIAQKTCLLVAAAVDLDRGRKAPTICEQNMLLRTALEQIKKCKKVWNLLKKTGDFSGDDCGVLLLLYEFEVKTKTNDPSLSRFVDSVWKMPDLECRTLETMALLAMDKPAYYPTIAHKAMKKLLLMYRKQEPVDVLKYSVCMHNLIKLLVADEVWNISLYPLKEVQSHFKNTLSIIRQNEGYPEEEIVWLMIKSWNIGILMSSKNKYISAERWAAMALDFLGHLSTLKTSYEAKVNLLYANLMEILDKKTDLRSTEMTEQLRALIVPPEDQGSVSSTNVAAQNHL.

It belongs to the SPO22 family. In terms of assembly, interacts with SYCP2. Interacts with PBXIP1; may prevent interaction between PBXIP1 and ESR2. Interacts with SHOC1. Interacts with REDIC1. Testis-specific.

It is found in the chromosome. Regulator of crossing-over during meiosis. Involved in initiation and/or maintenance of chromosome synapsis and formation of crossovers. The protein is Testis-expressed protein 11 (Tex11) of Mus musculus (Mouse).